A 313-amino-acid polypeptide reads, in one-letter code: Putative stilbene synthase 2 (313 aa).

The active site involves Cys-88. Residues Leu-191 and 229 to 231 (GGP) each bind substrate.

This sequence belongs to the thiolase-like superfamily. Chalcone/stilbene synthases family. As to quaternary structure, homodimer.

It is found in the cytoplasm. It carries out the reaction 4-coumaroyl-CoA + 3 malonyl-CoA + 3 H(+) = trans-resveratrol + 4 CO2 + 4 CoA. It functions in the pathway phytoalexin biosynthesis; 3,4',5-trihydroxystilbene biosynthesis; 3,4',5-trihydroxystilbene from trans-4-coumarate: step 2/2. This chain is Putative stilbene synthase 2, found in Arachis hypogaea (Peanut).